The following is a 290-amino-acid chain: Probable ECF RNA polymerase sigma factor SigI (290 aa).

The segment at 11–74 is sigma-70 factor domain-2; it reads WRAHRAYLVD…LCLDHIKSAS (64 aa). The Polymerase core binding signature appears at 34–37; sequence DMVQ. Residues 110–162 form a sigma-70 factor domain-4_2 region; it reads LALLIMLERLGPAERVVFVLHEIFGLPYQQIATTIGSQASTCRQLAHRARRKI. Residues 137–156 constitute a DNA-binding region (H-T-H motif); the sequence is YQQIATTIGSQASTCRQLAH.

The protein belongs to the sigma-70 factor family. ECF subfamily. As to quaternary structure, interacts transiently with the RNA polymerase catalytic core formed by RpoA, RpoB, RpoC and RpoZ (2 alpha, 1 beta, 1 beta' and 1 omega subunit) to form the RNA polymerase holoenzyme that can initiate transcription.

Sigma factors are initiation factors that promote the attachment of RNA polymerase to specific initiation sites and are then released. Extracytoplasmic function (ECF) sigma factors are held in an inactive form by a cognate anti-sigma factor until released, although no anti-sigma factor is known for this protein. The chain is Probable ECF RNA polymerase sigma factor SigI (sigI) from Mycobacterium tuberculosis (strain CDC 1551 / Oshkosh).